A 352-amino-acid polypeptide reads, in one-letter code: Anthranilate phosphoribosyltransferase (352 aa).

5-phospho-alpha-D-ribose 1-diphosphate contacts are provided by residues glycine 83, 86–87, threonine 91, 93–96, 111–119, and alanine 123; these read GD, NIST, and KHGGRSVSS. Glycine 83 is an anthranilate binding site. Position 95 (serine 95) interacts with Mg(2+). Arginine 169 is a binding site for anthranilate. Mg(2+) is bound by residues aspartate 228 and glutamate 229.

It belongs to the anthranilate phosphoribosyltransferase family. As to quaternary structure, homodimer. Requires Mg(2+) as cofactor.

It catalyses the reaction N-(5-phospho-beta-D-ribosyl)anthranilate + diphosphate = 5-phospho-alpha-D-ribose 1-diphosphate + anthranilate. It participates in amino-acid biosynthesis; L-tryptophan biosynthesis; L-tryptophan from chorismate: step 2/5. In terms of biological role, catalyzes the transfer of the phosphoribosyl group of 5-phosphorylribose-1-pyrophosphate (PRPP) to anthranilate to yield N-(5'-phosphoribosyl)-anthranilate (PRA). The sequence is that of Anthranilate phosphoribosyltransferase from Neisseria meningitidis serogroup C (strain 053442).